Here is a 127-residue protein sequence, read N- to C-terminus: Fluoride-specific ion channel FluC (127 aa).

Transmembrane regions (helical) follow at residues 4–24 (PILAIALGSTLGGLLRWGLGL), 36–56 (GTLVANLIAGYVVGVAIAFFA), 68–88 (LVITGFCGGLSTFSTFSAEIV), and 98–118 (WAMSAIAVHVAGSLIMTLAGI). Na(+) contacts are provided by G75 and S78.

The protein belongs to the fluoride channel Fluc/FEX (TC 1.A.43) family.

It is found in the cell inner membrane. It catalyses the reaction fluoride(in) = fluoride(out). Na(+) is not transported, but it plays an essential structural role and its presence is essential for fluoride channel function. Functionally, fluoride-specific ion channel. Important for reducing fluoride concentration in the cell, thus reducing its toxicity. This chain is Fluoride-specific ion channel FluC, found in Nitrosomonas europaea (strain ATCC 19718 / CIP 103999 / KCTC 2705 / NBRC 14298).